The sequence spans 308 residues: Probable peptidyl-prolyl cis-trans isomerase B (308 aa).

The tract at residues 74 to 123 is disordered; it reads DHQSTTSATPTDSASTSPPQAATAPPLPPFKPSANLGANCQYPPSPDKAV. A compositionally biased stretch (low complexity) spans 77-97; it reads STTSATPTDSASTSPPQAATA. The region spanning 139-307 is the PPIase cyclophilin-type domain; the sequence is AQVSVSMVTN…TEVTITSVLL (169 aa).

Belongs to the cyclophilin-type PPIase family.

The catalysed reaction is [protein]-peptidylproline (omega=180) = [protein]-peptidylproline (omega=0). Its function is as follows. PPIases accelerate the folding of proteins. It catalyzes the cis-trans isomerization of proline imidic peptide bonds in oligopeptides. In Mycobacterium tuberculosis (strain CDC 1551 / Oshkosh), this protein is Probable peptidyl-prolyl cis-trans isomerase B (ppiB).